A 301-amino-acid polypeptide reads, in one-letter code: Homoserine O-acetyltransferase (301 aa).

Cys142 serves as the catalytic Acyl-thioester intermediate. Substrate is bound by residues Lys163 and Ser192. His235 functions as the Proton acceptor in the catalytic mechanism. Residue Glu237 is part of the active site. Residue Arg249 coordinates substrate.

It belongs to the MetA family.

It is found in the cytoplasm. It catalyses the reaction L-homoserine + acetyl-CoA = O-acetyl-L-homoserine + CoA. The protein operates within amino-acid biosynthesis; L-methionine biosynthesis via de novo pathway; O-acetyl-L-homoserine from L-homoserine: step 1/1. Its function is as follows. Transfers an acetyl group from acetyl-CoA to L-homoserine, forming acetyl-L-homoserine. The chain is Homoserine O-acetyltransferase from Bacillus cytotoxicus (strain DSM 22905 / CIP 110041 / 391-98 / NVH 391-98).